The primary structure comprises 254 residues: MVPWLGPDDPFPSIERALGPATGAPGLLAASADLLPSRLIDAYLRGIFPWYSDGQPVLWWSPDPRMILVPAEFKVSPSLRKTLKRVLRAPEWEVRVDHDFAGVMRACAQAPRRGQRGTWITAEIIDAYTSLYRSGNAHSIETWHDGRRVGGLYGVSFGRMFFGESMYADVTDASKIALAALIAHLREQGLEMIDCQQNTSHLASLGGREIARKAFVAHVRSAVAEPPIPWQFDKRVLAALTSPAETAAPTGTER.

It belongs to the L/F-transferase family.

The protein localises to the cytoplasm. The catalysed reaction is N-terminal L-lysyl-[protein] + L-leucyl-tRNA(Leu) = N-terminal L-leucyl-L-lysyl-[protein] + tRNA(Leu) + H(+). It carries out the reaction N-terminal L-arginyl-[protein] + L-leucyl-tRNA(Leu) = N-terminal L-leucyl-L-arginyl-[protein] + tRNA(Leu) + H(+). It catalyses the reaction L-phenylalanyl-tRNA(Phe) + an N-terminal L-alpha-aminoacyl-[protein] = an N-terminal L-phenylalanyl-L-alpha-aminoacyl-[protein] + tRNA(Phe). In terms of biological role, functions in the N-end rule pathway of protein degradation where it conjugates Leu, Phe and, less efficiently, Met from aminoacyl-tRNAs to the N-termini of proteins containing an N-terminal arginine or lysine. This Burkholderia orbicola (strain MC0-3) protein is Leucyl/phenylalanyl-tRNA--protein transferase.